The following is a 466-amino-acid chain: Ras-GEF domain-containing family member 1C (466 aa).

Disordered regions lie at residues 1 to 35 (MPRT…PLLD) and 443 to 466 (SESP…LGKT). The region spanning 34-164 (LDGAPSSASL…LLQTLHQKLA (131 aa)) is the N-terminal Ras-GEF domain. Residues 200 to 446 (DPYTLAQQLT…YLASYESESP (247 aa)) enclose the Ras-GEF domain.

In terms of biological role, guanine nucleotide exchange factor (GEF). The polypeptide is Ras-GEF domain-containing family member 1C (Rasgef1c) (Mus musculus (Mouse)).